We begin with the raw amino-acid sequence, 687 residues long: Translation initiation factor IF-2 (687 aa).

The region spanning 186–355 (KRPPIVTVMG…LLTAEMLELK (170 aa)) is the tr-type G domain. The segment at 195-202 (GHVDHGKT) is G1. Residue 195–202 (GHVDHGKT) coordinates GTP. Residues 220–224 (GITQH) form a G2 region. The tract at residues 241–244 (DTPG) is G3. GTP is bound by residues 241–245 (DTPGH) and 295–298 (NKID). The tract at residues 295–298 (NKID) is G4. The G5 stretch occupies residues 331–333 (SAK).

It belongs to the TRAFAC class translation factor GTPase superfamily. Classic translation factor GTPase family. IF-2 subfamily.

Its subcellular location is the cytoplasm. Its function is as follows. One of the essential components for the initiation of protein synthesis. Protects formylmethionyl-tRNA from spontaneous hydrolysis and promotes its binding to the 30S ribosomal subunits. Also involved in the hydrolysis of GTP during the formation of the 70S ribosomal complex. In Clostridium botulinum (strain Alaska E43 / Type E3), this protein is Translation initiation factor IF-2.